The chain runs to 471 residues: Protein naked cuticle homolog 1 (471 aa).

2 disordered regions span residues 1 to 23 (MGKL…GDSF) and 41 to 82 (QRCP…DEDD). Residue G2 is the site of N-myristoyl glycine attachment. Residues 62-75 (GTRELVGDTSREAL) are compositionally biased toward basic and acidic residues. Residues 125–190 (QCDVSVEEDS…LRVKLTVAPD (66 aa)) form an interaction with DVL1, DVL2 and DVL3 region. Residues 131 to 166 (EEDSRQEWTFTLYDFDNNGKVTREDITSLLHTIYEV) form the EF-hand domain. Ca(2+) is bound by residues D144, D146, N148, K150, and D155. Disordered stretches follow at residues 273–314 (GPGS…QGVD), 337–382 (GTQD…SPSA), and 448–471 (QAVQ…FYQP). The segment covering 453–471 (HEHHHHHEHHHHYHHFYQP) has biased composition (basic residues).

Belongs to the NKD family. In terms of assembly, interacts with DVL1, DVL2, DVL3 and PPP2R3A. In terms of tissue distribution, highly expressed in lung. Also expressed in brain, heart, kidney, liver, skin, stomach and testis. Within the testis expression is found in the seminiferous epithelium and round and elongating spermatids.

The protein resides in the cell membrane. It is found in the cytoplasm. Functionally, cell autonomous antagonist of the canonical Wnt signaling pathway. May activate a second Wnt signaling pathway that controls planar cell polarity. Required for spermatogenesis. The chain is Protein naked cuticle homolog 1 (Nkd1) from Mus musculus (Mouse).